The primary structure comprises 360 residues: Probable ribonucleoside-diphosphate reductase small subunit 376L (360 aa).

The Fe cation site is built by Asp-67, Glu-98, and His-101. Tyr-105 is an active-site residue. Positions 172, 206, and 209 each coordinate Fe cation.

Belongs to the ribonucleoside diphosphate reductase small chain family. Heterotetramer composed of a homodimer of the large subunit (R1) and a homodimer of the small subunit (R2). Larger multisubunit protein complex are also active, composed of (R1)n(R2)n. Fe cation is required as a cofactor.

It catalyses the reaction a 2'-deoxyribonucleoside 5'-diphosphate + [thioredoxin]-disulfide + H2O = a ribonucleoside 5'-diphosphate + [thioredoxin]-dithiol. Its function is as follows. Ribonucleoside-diphosphate reductase holoenzyme provides the precursors necessary for viral DNA synthesis. Allows virus growth in non-dividing cells. Catalyzes the biosynthesis of deoxyribonucleotides from the corresponding ribonucleotides. In Acheta domesticus (House cricket), this protein is Probable ribonucleoside-diphosphate reductase small subunit 376L.